The following is a 516-amino-acid chain: Radial spoke head protein 3 homolog A (516 aa).

3 disordered regions span residues 1-45 (MAAT…GNPA), 120-139 (STLN…AEAS), and 190-233 (PTGQ…PVEG). A compositionally biased stretch (basic residues) spans 12-25 (AKKRPLHQRARRPA). Residues 120-129 (STLNQASAMT) are compositionally biased toward polar residues. Residues 208 to 217 (QARRRALARK) are compositionally biased toward basic residues. Basic and acidic residues predominate over residues 218–233 (RAQEQLKPRTPEPVEG). At Thr270 the chain carries Phosphothreonine; by MAPK1. Residues 333 to 369 (YEEIRNVELAEVQRLEEQERRHREEKERRKKQQWEIV) adopt a coiled-coil conformation. Residues 459–516 (EAMPPGQKTNVINGPNTVTDPSVTTLHTQKPVLDRVSSQPAPSQERKPVEEGGHLMAE) form a disordered region. The span at 465–486 (QKTNVINGPNTVTDPSVTTLHT) shows a compositional bias: polar residues. A compositionally biased stretch (basic and acidic residues) spans 502–516 (QERKPVEEGGHLMAE).

Belongs to the flagellar radial spoke RSP3 family. As to quaternary structure, may be a component of axonemal radial spokes. Interacts with IQUB. Interacts with phosphorylated MAPK1. Interacts with MEK1. Interacts with PKA regulatory subunits PRKAR1A and PRKAR1B. Interacts with RSPH1. Interacts with RSPH4A. Interacts with RSPH6A. Interacts with RSPH9. Interacts with CFAP61. Interacts with LRRC23.

The protein resides in the cytoplasm. It localises to the cytoskeleton. Its subcellular location is the cilium axoneme. The protein localises to the flagellum axoneme. Functionally, may function as part of axonemal radial spoke complexes that play an important part in the motility of sperm and cilia. Functions as a protein kinase A-anchoring protein that scaffolds the cAMP-dependent protein kinase holoenzyme. May serve as a point of convergence for MAPK and PKA signaling in cilia. The chain is Radial spoke head protein 3 homolog A (Rsph3a) from Mus musculus (Mouse).